A 178-amino-acid chain; its full sequence is Large ribosomal subunit protein bL25 (178 aa).

It belongs to the bacterial ribosomal protein bL25 family. CTC subfamily. Part of the 50S ribosomal subunit; part of the 5S rRNA/L5/L18/L25 subcomplex. Contacts the 5S rRNA. Binds to the 5S rRNA independently of L5 and L18.

Functionally, this is one of the proteins that binds to the 5S RNA in the ribosome where it forms part of the central protuberance. This chain is Large ribosomal subunit protein bL25, found in Wolinella succinogenes (strain ATCC 29543 / DSM 1740 / CCUG 13145 / JCM 31913 / LMG 7466 / NCTC 11488 / FDC 602W) (Vibrio succinogenes).